A 57-amino-acid chain; its full sequence is MPANQPPLYLTFLLLILLYLIITLYVWTILTINHKTAVRYAALYQRSCSRWGFDQSL.

At 1–8 (MPANQPPL) the chain is on the virion surface side. The helical transmembrane segment at 9-29 (YLTFLLLILLYLIITLYVWTI) threads the bilayer. The Intravirion portion of the chain corresponds to 30–57 (LTINHKTAVRYAALYQRSCSRWGFDQSL).

The protein belongs to the rubulavirus small hydrophobic protein family. Interacts with host TNFRSF1A, RIPK1 and IRAK1; these interactions interfere with host NF-kappa-B activation at the level of receptor complexes. Interacts with host protein UBQLN4.

Its subcellular location is the virion membrane. The protein resides in the host cell membrane. Functionally, plays a role in the inhibition of the host NF-kappa-B pathway. This inhibition occurs at the receptor level, by preventing the signaling of TNFR1 as well as IL-1R and TLR3. In Homo sapiens (Human), this protein is Small hydrophobic protein (SH).